The following is a 138-amino-acid chain: UPF0047 protein YjbQ (138 aa).

The protein belongs to the UPF0047 family.

This is UPF0047 protein YjbQ (yjbQ) from Escherichia coli O157:H7.